A 570-amino-acid chain; its full sequence is Protein NDNF (570 aa).

An N-terminal signal peptide occupies residues 1 to 19; it reads MKLCPWYIALILLPVCLQS. Fibronectin type-III domains follow at residues 261–333 and 447–566; these read NNAG…VGTF and PSLP…IVKT. Asn-324 carries an N-linked (GlcNAc...) asparagine glycan.

It is found in the secreted. Secretory protein that plays a role in various cellular processes. Acts as a chemorepellent acting on gonadotropin-releasing hormone (GnRH) expressing neurons regulating their migration to the hypothalamus. Also promotes neuron migration, growth and survival as well as neurite outgrowth and is involved in the development of the olfactory system. May also act through the regulation of growth factors activity and downstream signaling. Also regulates extracellular matrix assembly and cell adhesiveness. Promotes endothelial cell survival, vessel formation and plays an important role in the process of revascularization through NOS3-dependent mechanisms. This is Protein NDNF (ndnf) from Xenopus tropicalis (Western clawed frog).